The following is a 95-amino-acid chain: MTVKHLIVCYDVEKTKDRNKVIKVLEYYGLIRVQYSVFMGSLTETRLHQMNARIKREFTKPSIKILVIEVCNACMERALLVHEELPKVNRQFEVI.

A Mg(2+)-binding site is contributed by aspartate 11.

The protein belongs to the CRISPR-associated endoribonuclease Cas2 protein family. Homodimer, forms a heterotetramer with a Cas1 homodimer. It depends on Mg(2+) as a cofactor.

In terms of biological role, CRISPR (clustered regularly interspaced short palindromic repeat), is an adaptive immune system that provides protection against mobile genetic elements (viruses, transposable elements and conjugative plasmids). CRISPR clusters contain sequences complementary to antecedent mobile elements and target invading nucleic acids. CRISPR clusters are transcribed and processed into CRISPR RNA (crRNA). Functions as a ssRNA-specific endoribonuclease. Involved in the integration of spacer DNA into the CRISPR cassette. The sequence is that of CRISPR-associated endoribonuclease Cas2 1 from Methanospirillum hungatei JF-1 (strain ATCC 27890 / DSM 864 / NBRC 100397 / JF-1).